Reading from the N-terminus, the 27-residue chain is Conotoxin as14a (27 aa).

2 cysteine pairs are disulfide-bonded: Cys6–Cys26 and Cys10–Cys22.

The protein belongs to the conotoxin L superfamily. In terms of tissue distribution, expressed by the venom duct.

It is found in the secreted. Its function is as follows. In vivo, intracranial injection, elicits scratching and grooming activity in mice. The polypeptide is Conotoxin as14a (Conus cancellatus (Cancellate cone)).